The primary structure comprises 97 residues: Osteocalcin (97 aa).

The first 18 residues, 1-18, serve as a signal peptide directing secretion; that stretch reads MKTLAILVLCSLAAICLT. A propeptide spanning residues 19–52 is cleaved from the precursor; the sequence is SSASAGAQPAGDSPVQGGLFMEKDQASAVVRQTR. In terms of domain architecture, Gla spans 53-93; the sequence is AAKELTLAQTESLREVCETNMACDEMADAQGIVAAYQAFYG. The Ca(2+) site is built by glutamate 63, glutamate 67, glutamate 70, and aspartate 76. 4-carboxyglutamate is present on residues glutamate 63, glutamate 67, and glutamate 70. A disulfide bond links cysteine 69 and cysteine 75. At glutamate 77 the chain carries 4-carboxyglutamate.

The protein belongs to the osteocalcin/matrix Gla protein family. In terms of processing, gamma-carboxyglutamate residues are formed by vitamin K dependent carboxylation by GGCX. These residues are essential for the binding of calcium. In terms of tissue distribution, in the branchial arches, BGP is found outside the chondrocyte-containing zone. It is found in some cells in the basal zone of the branchial filaments, near the branchial arches, and within the extracellular matrix in the medial zone. In the vertebra, BGP is found in the mineralized bone matrix.

The protein localises to the secreted. Its function is as follows. The carboxylated form is one of the main organic components of the bone matrix, which constitutes 1-2% of the total bone protein. The carboxylated form binds strongly to apatite and calcium. This Argyrosomus regius (Meagre) protein is Osteocalcin (bglap).